Reading from the N-terminus, the 59-residue chain is Lantibiotic lacticin 3147 A1 (59 aa).

Positions 1 to 29 (MNKNEIETQPVTWLEEVSDQNFDEDVFGA) are excised as a propeptide. A cross-link (lanthionine (Cys-Ser)) is located at residues 30-31 (CS). Threonine 32 and threonine 34 each carry 2,3-didehydrobutyrine. Serine 36 is subject to 2,3-didehydroalanine (Ser). Positions 38-48 (SDYWGNNGAWC) form a cross-link, lanthionine (Ser-Cys). 2 cross-links (beta-methyllanthionine (Thr-Cys)) span residues 49–54 (TLTHEC) and 51–58 (THECMAWC).

Post-translationally, maturation of lantibiotics involves the enzymatic conversion of Thr, and Ser into dehydrated AA and the formation of thioether bonds with cysteine. This is followed by membrane translocation and cleavage of the modified precursor. In terms of processing, it is not established whether the 2,3-didehydrobutyrines are the E- or Z-isomers. In the NMR model they were assumed to be the Z-isomer.

The protein resides in the secreted. Its function is as follows. Lanthionine-containing peptide antibiotic (lantibiotic) active on Gram-positive bacteria. The bactericidal activity of lantibiotics is based on depolarization of energized bacterial cytoplasmic membranes, initiated by the formation of aqueous transmembrane pores. When present individually lacticin 3147 A1 exhibits strong activity towards L.lactis strain AM2, weak activity towards L.lactis strain HP and no activity towards L.lactis strain IFPL359, but when combined with lacticin 3147 A2 it displays strong activity towards all three strains. The sequence is that of Lantibiotic lacticin 3147 A1 from Lactococcus lactis subsp. lactis (Streptococcus lactis).